The chain runs to 352 residues: Protein-glutamate methylesterase/protein-glutamine glutaminase 1 (352 aa).

The Response regulatory domain occupies 5 to 122 (KVLVVDDSAF…SLDVLSVKEE (118 aa)). Asp-56 carries the post-translational modification 4-aspartylphosphate. A CheB-type methylesterase domain is found at 155–352 (PDQDRKLNKL…EITEEVLSML (198 aa)). Active-site residues include Ser-170, His-197, and Asp-297.

This sequence belongs to the CheB family. Phosphorylated by CheA. Phosphorylation of the N-terminal regulatory domain activates the methylesterase activity.

The protein resides in the cytoplasm. It carries out the reaction [protein]-L-glutamate 5-O-methyl ester + H2O = L-glutamyl-[protein] + methanol + H(+). The enzyme catalyses L-glutaminyl-[protein] + H2O = L-glutamyl-[protein] + NH4(+). Functionally, involved in chemotaxis. Part of a chemotaxis signal transduction system that modulates chemotaxis in response to various stimuli. Catalyzes the demethylation of specific methylglutamate residues introduced into the chemoreceptors (methyl-accepting chemotaxis proteins or MCP) by CheR. Also mediates the irreversible deamidation of specific glutamine residues to glutamic acid. The sequence is that of Protein-glutamate methylesterase/protein-glutamine glutaminase 1 from Syntrophomonas wolfei subsp. wolfei (strain DSM 2245B / Goettingen).